The primary structure comprises 267 residues: HTH-type transcriptional activator CsvR (267 aa).

2 consecutive DNA-binding regions (H-T-H motif) follow at residues 183 to 204 and 230 to 253; these read AIIA…ESED and ISQI…NKHF.

In terms of assembly, homodimer.

Transcriptional activator of fimbrial genes in enterotoxigenic E.coli. In Escherichia coli, this protein is HTH-type transcriptional activator CsvR.